We begin with the raw amino-acid sequence, 260 residues long: Small ribosomal subunit protein uS2 (260 aa).

The disordered stretch occupies residues 225 to 260 (KGQTQTEAAPNAQAAPEAAAPAEQPAEEAAAASSEG). Positions 231-260 (EAAPNAQAAPEAAAPAEQPAEEAAAASSEG) are enriched in low complexity.

This sequence belongs to the universal ribosomal protein uS2 family.

This Rhodopirellula baltica (strain DSM 10527 / NCIMB 13988 / SH1) protein is Small ribosomal subunit protein uS2.